Here is a 1400-residue protein sequence, read N- to C-terminus: RNA polymerase II-associated protein 1 (1400 aa).

Disordered regions lie at residues 35–54, 60–95, 161–215, and 269–310; these read KGSR…QDHR, DSLP…EERL, VSDN…GKGL, and REQT…DKLE. Basic and acidic residues-rich tracts occupy residues 39-54 and 85-95; these read RRGD…QDHR and LPHDEDPEERL. A compositionally biased stretch (basic and acidic residues) spans 269 to 282; sequence REQTETKATKEQNP. Thr329 bears the Phosphothreonine mark. Positions 504–539 are disordered; sequence PSHDDKEDEDEDEELTKEKVNRKTPEEGSRPPPDLA. Over residues 509-518 the composition is skewed to acidic residues; it reads KEDEDEDEEL. The span at 519–539 shows a compositional bias: basic and acidic residues; it reads TKEKVNRKTPEEGSRPPPDLA.

The protein belongs to the RPAP1 family. In terms of assembly, part of an RNA polymerase II complex that contains POLR2A, POLR2B, POLR2C, POLR2D, POLR2E, POLR2F, POLR2G, POLR2H, POLR2I, POLR2J, POLR2K, POLR2L, RPAP1, FCP1 plus the general transcription factors TFIIB and TFIIF.

It is found in the nucleus. Forms an interface between the RNA polymerase II enzyme and chaperone/scaffolding protein, suggesting that it is required to connect RNA polymerase II to regulators of protein complex formation. Required for interaction of the RNA polymerase II complex with acetylated histone H3. The chain is RNA polymerase II-associated protein 1 (Rpap1) from Rattus norvegicus (Rat).